The chain runs to 208 residues: NAD(P)H-quinone oxidoreductase subunit I (208 aa).

2 consecutive 4Fe-4S ferredoxin-type domains span residues 55–84 and 95–124; these read GRIH…VDWV and RNYS…MTEE. [4Fe-4S] cluster is bound by residues Cys64, Cys67, Cys70, Cys74, Cys104, Cys107, Cys110, and Cys114.

This sequence belongs to the complex I 23 kDa subunit family. As to quaternary structure, NDH-1 is composed of at least 11 different subunits. [4Fe-4S] cluster serves as cofactor.

The protein localises to the cellular thylakoid membrane. The enzyme catalyses a plastoquinone + NADH + (n+1) H(+)(in) = a plastoquinol + NAD(+) + n H(+)(out). It catalyses the reaction a plastoquinone + NADPH + (n+1) H(+)(in) = a plastoquinol + NADP(+) + n H(+)(out). NDH-1 shuttles electrons from an unknown electron donor, via FMN and iron-sulfur (Fe-S) centers, to quinones in the respiratory and/or the photosynthetic chain. The immediate electron acceptor for the enzyme in this species is believed to be plastoquinone. Couples the redox reaction to proton translocation, and thus conserves the redox energy in a proton gradient. The sequence is that of NAD(P)H-quinone oxidoreductase subunit I from Prochlorococcus marinus (strain MIT 9215).